Reading from the N-terminus, the 309-residue chain is Branched-chain-amino-acid aminotransferase (309 aa).

Residue Lys-160 is modified to N6-(pyridoxal phosphate)lysine.

Belongs to the class-IV pyridoxal-phosphate-dependent aminotransferase family. Homohexamer. Pyridoxal 5'-phosphate serves as cofactor.

It carries out the reaction L-leucine + 2-oxoglutarate = 4-methyl-2-oxopentanoate + L-glutamate. The enzyme catalyses L-isoleucine + 2-oxoglutarate = (S)-3-methyl-2-oxopentanoate + L-glutamate. The catalysed reaction is L-valine + 2-oxoglutarate = 3-methyl-2-oxobutanoate + L-glutamate. Its pathway is amino-acid biosynthesis; L-isoleucine biosynthesis; L-isoleucine from 2-oxobutanoate: step 4/4. The protein operates within amino-acid biosynthesis; L-leucine biosynthesis; L-leucine from 3-methyl-2-oxobutanoate: step 4/4. It functions in the pathway amino-acid biosynthesis; L-valine biosynthesis; L-valine from pyruvate: step 4/4. Acts on leucine, isoleucine and valine. The sequence is that of Branched-chain-amino-acid aminotransferase (ilvE) from Salmonella typhi.